The primary structure comprises 216 residues: Cyclo(L-leucyl-L-leucyl) synthase (216 aa).

S14 serves as the catalytic Nucleophile. Residues N17, 155–159, and Y179 contribute to the substrate site; that span reads YIFDE.

The protein belongs to the CDPS family.

It catalyses the reaction 2 L-leucyl-tRNA(Leu) = cyclo(L-leucyl-L-leucyl) + 2 tRNA(Leu) + 2 H(+). In terms of biological role, it uses activated amino acids in the form of aminoacyl-tRNAs (aa-tRNAs) as substrates to catalyze the ATP-independent formation of cyclodipeptides which are intermediates in diketopiperazine (DKP) biosynthetic pathways. Catalyzes the formation of cyclo(L-Leu-L-Leu) (cLL) from L-leucyl-tRNA(Leu). Can incorporate various nonpolar residues, such as L-leucine and L-methionine, into cyclodipeptides. This Corynebacterium jeikeium (strain K411) protein is Cyclo(L-leucyl-L-leucyl) synthase.